The sequence spans 217 residues: 3,4-dihydroxy-2-butanone 4-phosphate synthase (217 aa).

D-ribulose 5-phosphate contacts are provided by residues 37–38 (RE), aspartate 42, 150–154 (RRGHT), and glutamate 174. Glutamate 38 is a binding site for Mg(2+). Mg(2+) is bound at residue histidine 153.

This sequence belongs to the DHBP synthase family. As to quaternary structure, homodimer. It depends on Mg(2+) as a cofactor. The cofactor is Mn(2+).

It catalyses the reaction D-ribulose 5-phosphate = (2S)-2-hydroxy-3-oxobutyl phosphate + formate + H(+). The protein operates within cofactor biosynthesis; riboflavin biosynthesis; 2-hydroxy-3-oxobutyl phosphate from D-ribulose 5-phosphate: step 1/1. In terms of biological role, catalyzes the conversion of D-ribulose 5-phosphate to formate and 3,4-dihydroxy-2-butanone 4-phosphate. The sequence is that of 3,4-dihydroxy-2-butanone 4-phosphate synthase from Shewanella woodyi (strain ATCC 51908 / MS32).